The chain runs to 502 residues: ATP synthase subunit alpha (502 aa).

Gly-169–Thr-176 contributes to the ATP binding site.

It belongs to the ATPase alpha/beta chains family. In terms of assembly, F-type ATPases have 2 components, CF(1) - the catalytic core - and CF(0) - the membrane proton channel. CF(1) has five subunits: alpha(3), beta(3), gamma(1), delta(1), epsilon(1). CF(0) has three main subunits: a(1), b(2) and c(9-12). The alpha and beta chains form an alternating ring which encloses part of the gamma chain. CF(1) is attached to CF(0) by a central stalk formed by the gamma and epsilon chains, while a peripheral stalk is formed by the delta and b chains.

The protein resides in the cell inner membrane. It catalyses the reaction ATP + H2O + 4 H(+)(in) = ADP + phosphate + 5 H(+)(out). In terms of biological role, produces ATP from ADP in the presence of a proton gradient across the membrane. The alpha chain is a regulatory subunit. In Nitratidesulfovibrio vulgaris (strain ATCC 29579 / DSM 644 / CCUG 34227 / NCIMB 8303 / VKM B-1760 / Hildenborough) (Desulfovibrio vulgaris), this protein is ATP synthase subunit alpha.